A 1481-amino-acid chain; its full sequence is Chromosome partition protein MukB (1481 aa).

ATP is bound at residue 34 to 41 (GGNGAGKS). 5 coiled-coil regions span residues 338-480 (SLVQ…QAYQ), 509-604 (QHLA…APVW), 780-805 (RAARENRLEALYQERDSLAERYATLS), 835-1116 (EAEI…AKAG), and 1210-1265 (EAIE…LQAV). Positions 666-783 (PSGAEDSRMI…EVPLFGRAAR (118 aa)) are flexible hinge.

The protein belongs to the SMC family. MukB subfamily. In terms of assembly, homodimerization via its hinge domain. Binds to DNA via its C-terminal region. Interacts, and probably forms a ternary complex, with MukE and MukF via its C-terminal region. The complex formation is stimulated by calcium or magnesium. Interacts with tubulin-related protein FtsZ.

Its subcellular location is the cytoplasm. It localises to the nucleoid. Its function is as follows. Plays a central role in chromosome condensation, segregation and cell cycle progression. Functions as a homodimer, which is essential for chromosome partition. Involved in negative DNA supercoiling in vivo, and by this means organize and compact chromosomes. May achieve or facilitate chromosome segregation by condensation DNA from both sides of a centrally located replisome during cell division. The sequence is that of Chromosome partition protein MukB from Yersinia enterocolitica serotype O:8 / biotype 1B (strain NCTC 13174 / 8081).